We begin with the raw amino-acid sequence, 500 residues long: Glycerol kinase (500 aa).

ADP is bound at residue T16. Residues T16 and T17 each coordinate ATP. T16 contacts sn-glycerol 3-phosphate. R20 lines the ADP pocket. Residues R86, E87, Y138, and D247 each contribute to the sn-glycerol 3-phosphate site. R86, E87, Y138, D247, and Q248 together coordinate glycerol. ADP-binding residues include T269 and G312. Residues T269, G312, Q316, and G413 each contribute to the ATP site. Positions 413 and 417 each coordinate ADP.

It belongs to the FGGY kinase family.

The enzyme catalyses glycerol + ATP = sn-glycerol 3-phosphate + ADP + H(+). It functions in the pathway polyol metabolism; glycerol degradation via glycerol kinase pathway; sn-glycerol 3-phosphate from glycerol: step 1/1. Its activity is regulated as follows. Inhibited by fructose 1,6-bisphosphate (FBP). Key enzyme in the regulation of glycerol uptake and metabolism. Catalyzes the phosphorylation of glycerol to yield sn-glycerol 3-phosphate. This Rippkaea orientalis (strain PCC 8801 / RF-1) (Cyanothece sp. (strain PCC 8801)) protein is Glycerol kinase.